Reading from the N-terminus, the 1551-residue chain is Dual oxidase 1 (1551 aa).

The first 21 residues, 1–21 (MGFCLALAWTLLVGAWTPLGA), serve as a signal peptide directing secretion. At 22–596 (QNPISWEVQR…YFEGSGFGFG (575 aa)) the chain is on the extracellular side. A peroxidase-like; mediates peroxidase activity region spans residues 26 to 593 (SWEVQRFDGW…VRDYFEGSGF (568 aa)). The N-linked (GlcNAc...) asparagine glycan is linked to Asn-94. Residues 150–172 (RWDPETGRSPSNPRDPANQVTGW) form a disordered region. N-linked (GlcNAc...) asparagine glycans are attached at residues Asn-342, Asn-354, Asn-461, and Asn-534. The chain crosses the membrane as a helical span at residues 597–617 (VTIGTLCCFPLVSLLSAWIVA). Residues 618 to 1044 (RLRMRNFKRL…KRFIENYRRH (427 aa)) lie on the Cytoplasmic side of the membrane. 3 consecutive EF-hand domains span residues 815-850 (PQDMFVESMFSLADKDGNGYLSFREFLDILVVFMKG), 851-886 (SPEEKSRLMFRMYDFDGNGLISKDEFIRMLRSFIEI), and 895-930 (QLAEVVESMFRESGFQDKEELTWEDFHFMLRDHNSE). Ca(2+)-binding residues include Asp-828, Asp-830, Asn-832, Tyr-834, Glu-839, Asp-864, Asp-866, Asn-868, and Glu-875. The interval 956 to 1248 (YISQDMICPS…GSFALIQLPR (293 aa)) is interaction with TXNDC11. Residues 1045–1065 (IGCVAVFYAIAGGLFLERAYY) form a helical membrane-spanning segment. The Extracellular portion of the chain corresponds to 1066–1080 (YAFAAHHTGITDTTR). A helical membrane pass occupies residues 1081–1101 (VGIILSRGTAASISFMFSYIL). Positions 1087–1269 (RGTAASISFM…YGGDKLVSLS (183 aa)) constitute a Ferric oxidoreductase domain. Topologically, residues 1102–1148 (LTMCRNLITFLRETFLNRYVPFDAAVDFHRLIASTAIVLTVLHSVGH) are cytoplasmic. A helical membrane pass occupies residues 1149 to 1171 (VVNVYLFSISPLSVLSCLFPGLF). Residues 1172 to 1188 (HDDGSELPQKYYWWFFQ) lie on the Extracellular side of the membrane. A helical membrane pass occupies residues 1189–1209 (TVPGLTGVVLLLILAIMYVFA). Residues 1210 to 1226 (SHHFRRRSFRGFWLTHH) are Cytoplasmic-facing. Residues 1227-1247 (LYILLYVLLIIHGSFALIQLP) traverse the membrane as a helical segment. A topological domain (extracellular) is located at residue Arg-1248. Residues 1249 to 1269 (FHIFFLVPAIIYGGDKLVSLS) form a helical membrane-spanning segment. The FAD-binding FR-type domain maps to 1270-1376 (RKKVEISVVK…DGPFGEGHQE (107 aa)). Residues 1270–1551 (RKKVEISVVK…THFSHHYENF (282 aa)) are Cytoplasmic-facing.

This sequence in the N-terminal section; belongs to the peroxidase family. As to quaternary structure, interacts with TXNDC11, TPO and CYBA. N-glycosylated. Expressed in thyrocytes and tracheal surface epithelial cells (at protein level). Expressed in thyroid, trachea, bronchium, and to a lower extent, in placenta, testis, prostate, pancreas and heart.

The protein resides in the apical cell membrane. The enzyme catalyses NADH + O2 + H(+) = H2O2 + NAD(+). The catalysed reaction is NADPH + O2 + H(+) = H2O2 + NADP(+). It functions in the pathway hormone biosynthesis; thyroid hormone biosynthesis. Its activity is regulated as follows. The NADPH oxidase activity is calcium-dependent. Peroxidase activity is inhibited by aminobenzohydrazide. In terms of biological role, generates hydrogen peroxide which is required for the activity of thyroid peroxidase/TPO and lactoperoxidase/LPO. Plays a role in thyroid hormones synthesis and lactoperoxidase-mediated antimicrobial defense at the surface of mucosa. May have its own peroxidase activity through its N-terminal peroxidase-like domain. The sequence is that of Dual oxidase 1 (DUOX1) from Homo sapiens (Human).